We begin with the raw amino-acid sequence, 267 residues long: Translation initiation factor 2 subunit alpha (267 aa).

The 72-residue stretch at Gly-10 to Lys-81 folds into the S1 motif domain.

This sequence belongs to the eIF-2-alpha family. As to quaternary structure, heterotrimer composed of an alpha, a beta and a gamma chain.

EIF-2 functions in the early steps of protein synthesis by forming a ternary complex with GTP and initiator tRNA. In Halobacterium salinarum (strain ATCC 29341 / DSM 671 / R1), this protein is Translation initiation factor 2 subunit alpha.